We begin with the raw amino-acid sequence, 830 residues long: Lon protease (830 aa).

Residues Leu20–Val215 form the Lon N-terminal domain. Gly367–Thr374 is an ATP binding site. One can recognise a Lon proteolytic domain in the interval Glu602–Lys781. Active-site residues include Ser687 and Lys730. The segment at Pro784 to Lys830 is disordered. A compositionally biased stretch (basic residues) spans Lys802 to Lys830.

This sequence belongs to the peptidase S16 family. Homohexamer. Organized in a ring with a central cavity.

The protein resides in the cytoplasm. It catalyses the reaction Hydrolysis of proteins in presence of ATP.. Its function is as follows. ATP-dependent serine protease that mediates the selective degradation of mutant and abnormal proteins as well as certain short-lived regulatory proteins. Required for cellular homeostasis and for survival from DNA damage and developmental changes induced by stress. Degrades polypeptides processively to yield small peptide fragments that are 5 to 10 amino acids long. Binds to DNA in a double-stranded, site-specific manner. The polypeptide is Lon protease (Elusimicrobium minutum (strain Pei191)).